Reading from the N-terminus, the 606-residue chain is Proline--tRNA ligase (606 aa).

It belongs to the class-II aminoacyl-tRNA synthetase family. ProS type 1 subfamily. In terms of assembly, homodimer.

The protein localises to the cytoplasm. It carries out the reaction tRNA(Pro) + L-proline + ATP = L-prolyl-tRNA(Pro) + AMP + diphosphate. Its function is as follows. Catalyzes the attachment of proline to tRNA(Pro) in a two-step reaction: proline is first activated by ATP to form Pro-AMP and then transferred to the acceptor end of tRNA(Pro). As ProRS can inadvertently accommodate and process non-cognate amino acids such as alanine and cysteine, to avoid such errors it has two additional distinct editing activities against alanine. One activity is designated as 'pretransfer' editing and involves the tRNA(Pro)-independent hydrolysis of activated Ala-AMP. The other activity is designated 'posttransfer' editing and involves deacylation of mischarged Ala-tRNA(Pro). The misacylated Cys-tRNA(Pro) is not edited by ProRS. This chain is Proline--tRNA ligase, found in Kocuria rhizophila (strain ATCC 9341 / DSM 348 / NBRC 103217 / DC2201).